We begin with the raw amino-acid sequence, 322 residues long: 4-hydroxythreonine-4-phosphate dehydrogenase (322 aa).

Thr132 serves as a coordination point for substrate. A divalent metal cation is bound by residues His160, His205, and His260. Substrate-binding residues include Lys268, Asn277, and Arg286.

Belongs to the PdxA family. Homodimer. It depends on Zn(2+) as a cofactor. The cofactor is Mg(2+). Requires Co(2+) as cofactor.

Its subcellular location is the cytoplasm. The enzyme catalyses 4-(phosphooxy)-L-threonine + NAD(+) = 3-amino-2-oxopropyl phosphate + CO2 + NADH. Its pathway is cofactor biosynthesis; pyridoxine 5'-phosphate biosynthesis; pyridoxine 5'-phosphate from D-erythrose 4-phosphate: step 4/5. Its function is as follows. Catalyzes the NAD(P)-dependent oxidation of 4-(phosphooxy)-L-threonine (HTP) into 2-amino-3-oxo-4-(phosphooxy)butyric acid which spontaneously decarboxylates to form 3-amino-2-oxopropyl phosphate (AHAP). The polypeptide is 4-hydroxythreonine-4-phosphate dehydrogenase (Xanthomonas campestris pv. campestris (strain B100)).